We begin with the raw amino-acid sequence, 99 residues long: Large ribosomal subunit protein bL27 (99 aa).

The interval 1–21 (MAHKKGGGSTRNGRDSRAKRL) is disordered.

Belongs to the bacterial ribosomal protein bL27 family.

This chain is Large ribosomal subunit protein bL27, found in Thermomicrobium roseum (strain ATCC 27502 / DSM 5159 / P-2).